Here is a 226-residue protein sequence, read N- to C-terminus: V-type proton ATPase subunit E 1 (226 aa).

Ala2 carries the post-translational modification N-acetylalanine. Tyr56 bears the Phosphotyrosine mark.

The protein belongs to the V-ATPase E subunit family. In terms of assembly, V-ATPase is a heteromultimeric enzyme made up of two complexes: the ATP-hydrolytic V1 complex and the proton translocation V0 complex. The V1 complex consists of three catalytic AB heterodimers that form a heterohexamer, three peripheral stalks each consisting of EG heterodimers, one central rotor including subunits D and F, and the regulatory subunits C and H. The proton translocation complex V0 consists of the proton transport subunit a, a ring of proteolipid subunits c9c'', rotary subunit d, subunits e and f, and the accessory subunits ATP6AP1/Ac45 and ATP6AP2/PRR. Interacts with RABL2/RABL2A; binds preferentially to GTP-bound RABL2. Interacts with ALDOC. Interacts with RAB11B. In terms of tissue distribution, expressed within the midpiece of sperm tail (at protein level). Kidney; localizes to early distal nephron, encompassing thick ascending limbs and distal convoluted tubules (at protein level).

Its subcellular location is the apical cell membrane. It is found in the cytoplasmic vesicle. The protein resides in the secretory vesicle. It localises to the synaptic vesicle membrane. The protein localises to the clathrin-coated vesicle membrane. Its function is as follows. Subunit of the V1 complex of vacuolar(H+)-ATPase (V-ATPase), a multisubunit enzyme composed of a peripheral complex (V1) that hydrolyzes ATP and a membrane integral complex (V0) that translocates protons. V-ATPase is responsible for acidifying and maintaining the pH of intracellular compartments and in some cell types, is targeted to the plasma membrane, where it is responsible for acidifying the extracellular environment. This Mus musculus (Mouse) protein is V-type proton ATPase subunit E 1 (Atp6v1e1).